The following is a 300-amino-acid chain: Inositol polyphosphate multikinase beta (300 aa).

Ser-78 carries the phosphoserine modification.

This sequence belongs to the inositol phosphokinase (IPK) family. Interacts with KIN10 and KIN11. Phosphorylated by KIN10. In terms of tissue distribution, expressed in leaves, stems, roots, siliques and flowers. Detected in vascular strands, stigma cells, the abscission zones of fully elongated siliques, the root central cylinder and the root tip.

It localises to the nucleus. It carries out the reaction 1D-myo-inositol 1,4,5-trisphosphate + 2 ATP = 1D-myo-inositol 1,3,4,5,6-pentakisphosphate + 2 ADP + 2 H(+). The catalysed reaction is 1D-myo-inositol 1,3,4,6-tetrakisphosphate + ATP = 1D-myo-inositol 1,3,4,5,6-pentakisphosphate + ADP + H(+). Down-regulated by KIN10 through its protein phosphorylation. In terms of biological role, inositol phosphate kinase with a broad substrate specificity. Phosphorylates inositol 1,4,5-trisphosphate (Ins(1,4,5)P3), inositol 1,4,5,6-tetrakisphosphate (Ins(1,4,5,6)P4), inositol 1,3,4,5-tetrakisphosphate (Ins(1,3,4,5)P4), inositol 1,3,4,6-tetrakisphosphate (Ins(1,3,4,6)P4) and inositol 1,2,3,4,6-pentakisphosphate (Ins(1,2,3,4,6)P5) but not inositol 1,4-bisphosphate (Ins(1,4)P2), inositol 1,3,4-trisphosphate (Ins(1,3,4)P3), inositol 1,2,6-trisphosphate (Ins(1,2,6)P3), inositol 3,4,5,6-tetrakisphosphate (Ins(3,4,5,6)P4), inositol 1,3,4,5,6-pentakisphosphate (Ins(1,3,4,5,6)P5), inositol 1,2,4,5,6-pentakisphosphate (Ins(1,2,4,5,6)P5) or inositol hexakisphosphate (InsP6). Involved in the auxin signaling pathway. Regulates axillary shoot branching and is required for phytate synthesis in seeds. The chain is Inositol polyphosphate multikinase beta (IPK2b) from Arabidopsis thaliana (Mouse-ear cress).